Here is a 529-residue protein sequence, read N- to C-terminus: uncharacterized protein (529 aa).

A helical transmembrane segment spans residues 354 to 373; it reads FHVASFPWISWAILGSYIML.

It is found in the host membrane. This is an uncharacterized protein from Acidianus convivator (ATV).